The following is an 804-amino-acid chain: Endoplasmin (804 aa).

Residues 1 to 21 (MRALWVLGLCCVLLTFGSVRA) form the signal peptide. The SRT pseudosubstrate motif motif lies at 42–44 (SRT). A glycan (N-linked (GlcNAc...) asparagine) is linked at asparagine 62. Serine 64 carries the phosphoserine modification. An N-linked (GlcNAc...) asparagine glycan is attached at asparagine 107. The ATP site is built by asparagine 107, aspartate 149, and asparagine 162. The residue at position 168 (lysine 168) is an N6-(2-hydroxyisobutyryl)lysine. Serine 172 carries the post-translational modification Phosphoserine. Residue phenylalanine 199 coordinates ATP. Asparagine 217 carries N-linked (GlcNAc...) asparagine glycosylation. Positions 288–323 (TVEEPMEEEEAAKEEKEESDDEAAVEEEEEEKKPKT) are disordered. Residues 289–317 (VEEPMEEEEAAKEEKEESDDEAAVEEEEE) show a composition bias toward acidic residues. Residues serine 306 and serine 403 each carry the phosphoserine modification. Lysine 404 bears the N6-succinyllysine mark. Asparagine 445 is a glycosylation site (N-linked (GlcNAc...) asparagine). Phosphoserine is present on serine 447. Lysine 479 carries the post-translational modification N6-acetyllysine. 2 N-linked (GlcNAc...) asparagine glycosylation sites follow: asparagine 481 and asparagine 502. At lysine 633 the chain carries N6-succinyllysine. The segment at 750–804 (DPDAKVEEEPEEEPEETTEDTTEDTEQDDDEEMDAGADEEEQETSETSTAEKDEL) is disordered. The span at 757 to 793 (EEPEEEPEETTEDTTEDTEQDDDEEMDAGADEEEQET) shows a compositional bias: acidic residues. Positions 801–804 (KDEL) match the Prevents secretion from ER motif.

Belongs to the heat shock protein 90 family. In terms of assembly, homodimer; disulfide-linked. Component of an EIF2 complex at least composed of CELF1/CUGBP1, CALR, CALR3, EIF2S1, EIF2S2, HSP90B1 and HSPA5. Part of a large chaperone multiprotein complex comprising DNAJB11, HSP90B1, HSPA5, HYOU, PDIA2, PDIA4, PDIA6, PPIB, SDF2L1, UGGT1 and very small amounts of ERP29, but not, or at very low levels, CALR nor CANX. Interacts with AIMP1; regulates its retention in the endoplasmic reticulum. Hyperglycosylated form interacts with OS9; promoting its degradation by the endoplasmic reticulum associated degradation (ERAD). Interacts with CNPY3. This interaction is disrupted in the presence of ATP. Interacts with TLR4 and TLR9, but not with TLR3. Interacts with MZB1 in a calcium-dependent manner. Interacts with METTL23. Interacts with IL1B; the interaction facilitates cargo translocation into the ERGIC. Interacts with EIF2AK3. In terms of processing, phosphorylated by CK2. N-glycosylated cotranslationally at Asn-217 by STT3A-containing OST-A complex: this glycosylation is constitutive. In response to various stress, 5 additional facultative sites (Asn-62, Asn-107, Asn-445, Asn-481 and Asn-502) can be glycosylated post-translationally by STT3B-containing OST-B complex, leading to a hyperglycosylated form that is degraded by the ER-associated degradation (ERAD) pathway. In normal conditions, the OST-A complex together with CCDC134 prevent glycosylation at facultative sites during protein folding, thereby preventing hyperglycosylation. Mechanistically, nascent HSP90B1 is tethered during translation to a specialized CCDC134-containing translocon that forms a microenvironment for its folding, in which STT3A associates with the SRT pseudosubstrate motif, and prevents access to facultative glycosylation sites until folding is completed, rendering its facultative sites inaccessible to the OST-B complex.

The protein resides in the endoplasmic reticulum lumen. It localises to the sarcoplasmic reticulum lumen. Its subcellular location is the melanosome. It catalyses the reaction ATP + H2O = ADP + phosphate + H(+). Functionally, ATP-dependent chaperone involved in the processing of proteins in the endoplasmic reticulum, regulating their transport. Together with MESD, acts as a modulator of the Wnt pathway by promoting the folding of LRP6, a coreceptor of the canonical Wnt pathway. When associated with CNPY3, required for proper folding of Toll-like receptors. Promotes folding and trafficking of TLR4 to the cell surface. May participate in the unfolding of cytosolic leaderless cargos (lacking the secretion signal sequence) such as the interleukin 1/IL-1 to facilitate their translocation into the ERGIC (endoplasmic reticulum-Golgi intermediate compartment) and secretion; the translocation process is mediated by the cargo receptor TMED10. The chain is Endoplasmin (HSP90B1) from Sus scrofa (Pig).